The primary structure comprises 110 residues: MPFGWGRGRGRRRKMRMIRFPPQVRHFYPAIPSVGPPKPPIIMTYEEFEALRLVDYEGLTQEEAGRRMGISRGTVWRALTSARKKVAQMLVEGRELIILPQGNEIVRDEK.

This sequence belongs to the UPF0251 family.

In Pyrococcus horikoshii (strain ATCC 700860 / DSM 12428 / JCM 9974 / NBRC 100139 / OT-3), this protein is UPF0251 protein PH0803.